Here is a 731-residue protein sequence, read N- to C-terminus: NADH-ubiquinone oxidoreductase 75 kDa subunit, mitochondrial (731 aa).

The N-terminal 27 residues, 1 to 27 (MIRAPLVKALGALGSPTHQMASRAVRT), are a transit peptide targeting the mitochondrion. The 2Fe-2S ferredoxin-type domain maps to 40 to 118 (EKIEVFVDDI…GWRIKTNSDL (79 aa)). The [2Fe-2S] cluster site is built by Cys-74, Cys-85, Cys-88, and Cys-102. Residues 118–157 (LTRKAREGVMEFLLMNHPLDCPICDQGGECDLQDQAMAFG) form the 4Fe-4S His(Cys)3-ligated-type domain. Residues His-134, Cys-138, Cys-141, Cys-147, Cys-190, Cys-193, Cys-196, and Cys-240 each coordinate [4Fe-4S] cluster. The 57-residue stretch at 259-315 (IRKVSSIDVLDAVGSNIVVSTRTNEVLRILPRENEDVNEEWLADKSRFACDGLKRQR) folds into the 4Fe-4S Mo/W bis-MGD-type domain.

It belongs to the complex I 75 kDa subunit family. In terms of assembly, complex I is composed of about 45 different subunits. [2Fe-2S] cluster is required as a cofactor. [4Fe-4S] cluster serves as cofactor.

Its subcellular location is the mitochondrion inner membrane. The catalysed reaction is a ubiquinone + NADH + 5 H(+)(in) = a ubiquinol + NAD(+) + 4 H(+)(out). Core subunit of the mitochondrial membrane respiratory chain NADH dehydrogenase (Complex I) that is believed to belong to the minimal assembly required for catalysis. Complex I functions in the transfer of electrons from NADH to the respiratory chain. The immediate electron acceptor for the enzyme is believed to be ubiquinone. This is the largest subunit of complex I and it is a component of the iron-sulfur (IP) fragment of the enzyme. It may form part of the active site crevice where NADH is oxidized. This chain is NADH-ubiquinone oxidoreductase 75 kDa subunit, mitochondrial, found in Drosophila melanogaster (Fruit fly).